A 397-amino-acid chain; its full sequence is MAAVGSGGSNAAAGPGAVSAGSLEPGTASAAHRRLKYISLAVLVVQNASLILSIRYARTLPGDRFFATTAVVMAEVLKGLTCLLLLFAQKRGNVKHLALFLHEAVLVQYVDTLKLAVPSLIYTLQNNLQYVAISNMPAATFQVTYQLKILTTALFSVLMLNRSLSRLQWASLLLLFTGVAIVQAQQAGGGGPRPLDQNPGAGLAAVVASCLSSGFAGVYFEKILKGSSGSVWLRNLQLGLFGTALGLVGLWWAEGTAVARRGFFFGYTPAVWGVVLNQAFGGLLVAVVVKYADNILKGFATSLSIVLSTVASIRLFGFHVDPLFALGAGLVIGAVYLYSLPRGTAKAIASTSASASASTSGPCTHQQPPGQPPPPKLSSHRADLSTEPFLPKSVLVK.

Residues 1-21 form a disordered region; sequence MAAVGSGGSNAAAGPGAVSAG. The next 10 helical transmembrane spans lie at 3 to 23, 37 to 57, 65 to 85, 97 to 117, 140 to 160, 169 to 189, 200 to 220, 238 to 258, 269 to 289, and 315 to 335; these read AVGS…AGSL, YISL…IRYA, FFAT…CLLL, LALF…KLAV, TFQV…VLML, WASL…QAGG, GAGL…GVYF, LGLF…GTAV, PAVW…AVVV, and LFGF…IGAV. A compositionally biased stretch (low complexity) spans 9-21; that stretch reads SNAAAGPGAVSAG. Positions 355 to 397 are disordered; it reads ASASTSGPCTHQQPPGQPPPPKLSSHRADLSTEPFLPKSVLVK.

Belongs to the nucleotide-sugar transporter family. SLC35A subfamily. In terms of assembly, interacts with SLC35A3; the interaction is reduced in the presence of SLC35A4. Found in a complex with SLC35A3 and SLC35A4.

Its subcellular location is the golgi apparatus membrane. The enzyme catalyses UMP(out) + UDP-alpha-D-galactose(in) = UMP(in) + UDP-alpha-D-galactose(out). The catalysed reaction is UDP-N-acetyl-alpha-D-galactosamine(in) + UMP(out) = UDP-N-acetyl-alpha-D-galactosamine(out) + UMP(in). It carries out the reaction UMP(out) + UDP-alpha-D-glucose(in) = UMP(in) + UDP-alpha-D-glucose(out). It catalyses the reaction UMP(out) + UDP-N-acetyl-alpha-D-glucosamine(in) = UMP(in) + UDP-N-acetyl-alpha-D-glucosamine(out). The enzyme catalyses UDP-alpha-D-galactose(in) + AMP(out) = UDP-alpha-D-galactose(out) + AMP(in). The catalysed reaction is UDP-alpha-D-galactose(in) + CMP(out) = UDP-alpha-D-galactose(out) + CMP(in). It carries out the reaction UDP-N-acetyl-alpha-D-galactosamine(out) + UDP-alpha-D-galactose(in) = UDP-N-acetyl-alpha-D-galactosamine(in) + UDP-alpha-D-galactose(out). It catalyses the reaction UDP-N-acetyl-alpha-D-glucosamine(out) + UDP-alpha-D-galactose(in) = UDP-N-acetyl-alpha-D-glucosamine(in) + UDP-alpha-D-galactose(out). The enzyme catalyses UDP-alpha-D-galactose(in) + UDP-alpha-D-glucose(out) = UDP-alpha-D-galactose(out) + UDP-alpha-D-glucose(in). The catalysed reaction is UMP(out) + CMP(in) = UMP(in) + CMP(out). It carries out the reaction UMP(out) + AMP(in) = UMP(in) + AMP(out). Functionally, transports uridine diphosphate galactose (UDP-galactose) from the cytosol into the Golgi apparatus, functioning as an antiporter that exchanges UDP-galactose for UMP. It is also able to exchange UDP-galactose for AMP and CMP, and to transport UDP-N-acetylgalactosamine (UDP-GalNAc) and other nucleotide sugars. As a provider of UDP-galactose to galactosyltransferases present in the Golgi apparatus, it is necessary for globotriaosylceramide/globoside (Gb3Cer) synthesis from lactosylceramide. The polypeptide is UDP-galactose translocator (Canis lupus familiaris (Dog)).